A 143-amino-acid chain; its full sequence is MSRSGVAVADESLTAFNDLKLGKKYKFVLFGLNADKTSIIVKETSNERDYDVFLEKLPEDDCLYAVYDFEYEISGAEGKRSKIVFFTWSPDTAPIRSKMVYASSKDALRRALNGVSSDIQGTDFSEVAYESVLEKVSRGAGSH.

Residues 5–137 (GVAVADESLT…AYESVLEKVS (133 aa)) form the ADF-H domain.

This sequence belongs to the actin-binding proteins ADF family.

Its subcellular location is the cytoplasm. The protein localises to the cytoskeleton. It is found in the nucleus matrix. Controls reversibly actin polymerization and depolymerization in a pH-sensitive manner. It has the ability to bind G- and F-actin in a 1:1 ratio of cofilin to actin. Binding to F-actin is regulated by tropomyosin. It is the major component of intranuclear and cytoplasmic actin rods. Required for accumulation of actin at the cell division site via depolymerizing actin at the cell ends. In association with myosin II has a role in the assembly of the contractile ring via severing actin filaments. Involved in the maintenance of the contractile ring once formed. In association with profilin and capping protein, has a role in the mitotic reorganization of the actin cytoskeleton. The protein is Cofilin (COF1) of Eremothecium gossypii (strain ATCC 10895 / CBS 109.51 / FGSC 9923 / NRRL Y-1056) (Yeast).